Reading from the N-terminus, the 73-residue chain is Large ribosomal subunit protein uL24 (73 aa).

Basic and acidic residues predominate over residues 51-65; that stretch reads DDNPKGGFIHKEKPM. Residues 51-73 form a disordered region; it reads DDNPKGGFIHKEKPMHISNVKKA.

This sequence belongs to the universal ribosomal protein uL24 family. In terms of assembly, part of the 50S ribosomal subunit.

In terms of biological role, one of two assembly initiator proteins, it binds directly to the 5'-end of the 23S rRNA, where it nucleates assembly of the 50S subunit. Its function is as follows. One of the proteins that surrounds the polypeptide exit tunnel on the outside of the subunit. The protein is Large ribosomal subunit protein uL24 of Helicobacter pylori (strain Shi470).